The primary structure comprises 142 residues: Putative tyrosine phosphatase 123R (142 aa).

The Tyrosine-protein phosphatase domain maps to 2–137 (EPTKIVENLY…LAQFERWLNS (136 aa)). Cysteine 81 functions as the Phosphocysteine intermediate in the catalytic mechanism.

The protein belongs to the protein-tyrosine phosphatase family.

The polypeptide is Putative tyrosine phosphatase 123R (Invertebrate iridescent virus 6 (IIV-6)).